The sequence spans 240 residues: Ribose-5-phosphate isomerase A (240 aa).

The segment at 1–23 (MKTSGGSDAAKRRAGESAAETVT) is disordered. Residues 32-35 (TGST), 92-95 (DGAD), and 111-114 (KGGG) each bind substrate. E120 serves as the catalytic Proton acceptor. Residue K138 coordinates substrate.

It belongs to the ribose 5-phosphate isomerase family. In terms of assembly, homodimer.

It carries out the reaction aldehydo-D-ribose 5-phosphate = D-ribulose 5-phosphate. It participates in carbohydrate degradation; pentose phosphate pathway; D-ribose 5-phosphate from D-ribulose 5-phosphate (non-oxidative stage): step 1/1. Its function is as follows. Catalyzes the reversible conversion of ribose-5-phosphate to ribulose 5-phosphate. The protein is Ribose-5-phosphate isomerase A of Halorubrum lacusprofundi (strain ATCC 49239 / DSM 5036 / JCM 8891 / ACAM 34).